We begin with the raw amino-acid sequence, 206 residues long: Erythropoietin (206 aa).

The first 40 residues, 1-40 (MCEPAPPKPTQSAWHSFPECPALLLLLSLLLLPLGLPVLG), serve as a signal peptide directing secretion. Disulfide bonds link cysteine 47–cysteine 201 and cysteine 69–cysteine 73. N-linked (GlcNAc...) asparagine glycosylation occurs at asparagine 64. Residues asparagine 78 and asparagine 123 are each glycosylated (N-linked (GlcNAc...) asparagine).

It belongs to the EPO/TPO family. In terms of tissue distribution, produced by kidney or liver of adult mammals and by liver of fetal or neonatal mammals.

The protein resides in the secreted. Functionally, hormone involved in the regulation of erythrocyte proliferation and differentiation and the maintenance of a physiological level of circulating erythrocyte mass. Binds to EPOR leading to EPOR dimerization and JAK2 activation thereby activating specific downstream effectors, including STAT1 and STAT3. The protein is Erythropoietin (EPO) of Canis lupus familiaris (Dog).